The following is a 748-amino-acid chain: Adenosylcobalamin-dependent ribonucleoside-triphosphate reductase (748 aa).

A disulfide bond links cysteine 123 and cysteine 426. An effector region-1 region spans residues 151 to 162; that stretch reads SMPYSFMFDELM. The interval 172-320 is effector region-2; sequence TKDNIAKLPP…IGNLIGKTVV (149 aa). Catalysis depends on residues cysteine 415 and glutamate 417. Residues 572–633 are adenosylcobalamin-binding-1; sequence FHYAGYLIQR…DPAFASAGTV (62 aa). Residues 692–733 form an adenosylcobalamin-binding-2 region; sequence FKQAPKEPIDVKTYKQKCAAIHGSVAAVFAVQNADHDQKDLE.

It belongs to the class II ribonucleoside-triphosphate reductase family. As to quaternary structure, monomer. The cofactor is adenosylcob(III)alamin.

It catalyses the reaction a 2'-deoxyribonucleoside 5'-triphosphate + [thioredoxin]-disulfide + H2O = a ribonucleoside 5'-triphosphate + [thioredoxin]-dithiol. Allosterically regulated by ATP and dNTP. In Lacticaseibacillus paracasei (strain ATCC 334 / BCRC 17002 / CCUG 31169 / CIP 107868 / KCTC 3260 / NRRL B-441) (Lactobacillus paracasei), this protein is Adenosylcobalamin-dependent ribonucleoside-triphosphate reductase (rtpR).